The chain runs to 505 residues: MSPWSWFLLQTLCLLPTGAASRRGAPGTANCELKPQQSELNSFLWTIKRDPPSYFFGTIHVPYTRVWDFIPDNSKEAFLQSSIVYFELDLTDPYTISALTSCQMLPQGENLQDVLPRDIYCRLKRHLEYVKLMMPLWMTPDQRGKGLYADYLFNAIAGNWERKRPVWVMLMVNSLTEVDIKSRGVPVLDLFLAQEAERLRKQTGAVEKVEEQCHPLNGLNFSQVIFALNQTLLQQESLRAGSLQIPYTTEDLIKHYNCGDLSSVILSHDSSQVPNFINATLPPQERITAQEIDSYLRRELIYKRNERIGKRVKALLEEFPDKGFFFAFGAGHFMGNNTVLDVLRREGYEVEHAPAGRPIHKGKSKKTSTRPTLSTIFAPKVPTLEVPAPEAVSSGHSTLPPLVSRPGSADTPSEAEQRFRKKRRRSQRRPRLRQFSDLWVRLEESDIVPQLQVPVLDRHISTELRLPRRGHSHHSQMVASSACLSLWTPVFWVLVLAFQTETPLL.

The signal sequence occupies residues methionine 1–alanine 19. At alanine 20–methionine 477 the chain is on the extracellular side. N-linked (GlcNAc...) asparagine glycans are attached at residues asparagine 220, asparagine 229, asparagine 278, and asparagine 336. The tract at residues proline 389–arginine 428 is disordered. The span at phenylalanine 419–arginine 428 shows a compositional bias: basic residues. Residues valine 478–phenylalanine 498 traverse the membrane as a helical segment. The Cytoplasmic segment spans residues glutamine 499–leucine 505.

The protein belongs to the TIKI family. Requires Mn(2+) as cofactor. It depends on Co(2+) as a cofactor.

It is found in the cell membrane. Metalloprotease that acts as a negative regulator of the Wnt signaling pathway by mediating the cleavage of the 8 N-terminal residues of a subset of Wnt proteins. Following cleavage, Wnt proteins become oxidized and form large disulfide-bond oligomers, leading to their inactivation. Able to cleave WNT3A, WNT5, but not WNT11. Required for head formation. The polypeptide is Metalloprotease TIKI1 (TRABD2A) (Homo sapiens (Human)).